The sequence spans 471 residues: Glutamate--tRNA ligase (471 aa).

The 'HIGH' region motif lies at 9–19 (PSPTGYLHVGG). Positions 98, 100, 125, and 127 each coordinate Zn(2+). The 'KMSKS' region signature appears at 237–241 (KLSKR). Lysine 240 serves as a coordination point for ATP.

This sequence belongs to the class-I aminoacyl-tRNA synthetase family. Glutamate--tRNA ligase type 1 subfamily. In terms of assembly, monomer. Zn(2+) serves as cofactor.

The protein localises to the cytoplasm. The enzyme catalyses tRNA(Glu) + L-glutamate + ATP = L-glutamyl-tRNA(Glu) + AMP + diphosphate. In terms of biological role, catalyzes the attachment of glutamate to tRNA(Glu) in a two-step reaction: glutamate is first activated by ATP to form Glu-AMP and then transferred to the acceptor end of tRNA(Glu). This is Glutamate--tRNA ligase from Shigella flexneri.